The following is a 682-amino-acid chain: Serine/threonine-protein kinase PLK2 (682 aa).

The tract at residues A25–S67 is disordered. The segment covering Q36–V48 has biased composition (polar residues). Residues Y79–F331 form the Protein kinase domain. Residues L85 to C93 and K108 each bind ATP. The active-site Proton acceptor is D202. At T236 the chain carries Phosphothreonine. Residues T402 to S430 are disordered. POLO box domains lie at W500–E578 and Y598–N682.

It belongs to the protein kinase superfamily. Ser/Thr protein kinase family. CDC5/Polo subfamily. As to quaternary structure, interacts with CIB1. Interacts with NSF; causing NSF dissociation from GRIA2. Post-translationally, catalytic activity is enhanced by phosphorylation of Thr-236.

The protein localises to the cytoplasm. Its subcellular location is the cytoskeleton. It localises to the microtubule organizing center. The protein resides in the centrosome. It is found in the centriole. The protein localises to the cell projection. Its subcellular location is the dendrite. The enzyme catalyses L-seryl-[protein] + ATP = O-phospho-L-seryl-[protein] + ADP + H(+). The catalysed reaction is L-threonyl-[protein] + ATP = O-phospho-L-threonyl-[protein] + ADP + H(+). With respect to regulation, activated by phosphorylation of Thr-236. Once activated, activity is stimulated by binding target proteins. In terms of biological role, tumor suppressor serine/threonine-protein kinase involved in synaptic plasticity, centriole duplication and G1/S phase transition. Polo-like kinases act by binding and phosphorylating proteins that are already phosphorylated on a specific motif recognized by the POLO box domains. Phosphorylates CPAP, NPM1, RAPGEF2, RASGRF1, SNCA, SIPA1L1 and SYNGAP1. Plays a key role in synaptic plasticity and memory by regulating the Ras and Rap protein signaling: required for overactivity-dependent spine remodeling by phosphorylating the Ras activator RASGRF1 and the Rap inhibitor SIPA1L1 leading to their degradation by the proteasome. Conversely, phosphorylates the Rap activator RAPGEF2 and the Ras inhibitor SYNGAP1, promoting their activity. Also regulates synaptic plasticity independently of kinase activity, via its interaction with NSF that disrupts the interaction between NSF and the GRIA2 subunit of AMPARs, leading to a rapid rundown of AMPAR-mediated current that occludes long term depression. Required for procentriole formation and centriole duplication by phosphorylating CPAP and NPM1, respectively. Its induction by p53/TP53 suggests that it may participate in the mitotic checkpoint following stress. This is Serine/threonine-protein kinase PLK2 (Plk2) from Rattus norvegicus (Rat).